The following is a 435-amino-acid chain: Methionine aminopeptidase 2 (435 aa).

The tract at residues 57–77 is disordered; that stretch reads AIDGDQAAAKKKKSKKKKKKA. Over residues 65–77 the composition is skewed to basic residues; the sequence is AKKKKSKKKKKKA. His-188 serves as a coordination point for substrate. 3 residues coordinate a divalent metal cation: Asp-208, Asp-219, and His-288. His-296 is a binding site for substrate. A divalent metal cation is bound by residues Glu-321 and Glu-416.

The protein belongs to the peptidase M24A family. Methionine aminopeptidase eukaryotic type 2 subfamily. Requires Co(2+) as cofactor. The cofactor is Zn(2+). Mn(2+) is required as a cofactor. Fe(2+) serves as cofactor.

It is found in the cytoplasm. The enzyme catalyses Release of N-terminal amino acids, preferentially methionine, from peptides and arylamides.. Its function is as follows. Cotranslationally removes the N-terminal methionine from nascent proteins. The N-terminal methionine is often cleaved when the second residue in the primary sequence is small and uncharged (Met-Ala-, Cys, Gly, Pro, Ser, Thr, or Val). In Clavispora lusitaniae (strain ATCC 42720) (Yeast), this protein is Methionine aminopeptidase 2.